The sequence spans 273 residues: Large ribosomal subunit protein uL2c (273 aa).

Disordered stretches follow at residues 30–55 (EKKL…RHRG) and 222–243 (GSAM…PIGR). Positions 45–55 (NKGRITTRHRG) are enriched in basic residues.

This sequence belongs to the universal ribosomal protein uL2 family. In terms of assembly, part of the 50S ribosomal subunit.

The protein localises to the plastid. The protein is Large ribosomal subunit protein uL2c (rpl2) of Prototheca wickerhamii.